The chain runs to 699 residues: Serine/threonine-protein kinase PRR2 (699 aa).

The interval 168 to 193 (SSTKKNLANDISDNKHNNNSSNTIGH) is disordered. Polar residues predominate over residues 184 to 193 (NNNSSNTIGH). A Protein kinase domain is found at 361–653 (RDLDVVLGEG…INGILQDGWI (293 aa)). ATP is bound by residues 367 to 375 (LGEGSGGKV) and K390. Catalysis depends on D484, which acts as the Proton acceptor.

It belongs to the protein kinase superfamily. Ser/Thr protein kinase family.

The catalysed reaction is L-seryl-[protein] + ATP = O-phospho-L-seryl-[protein] + ADP + H(+). The enzyme catalyses L-threonyl-[protein] + ATP = O-phospho-L-threonyl-[protein] + ADP + H(+). Its function is as follows. Protein kinase that functions as a regulator in the pheromone-induced mating pathway downstream of mitogen-activated protein kinase (MAPK) FUS3. Diminishes transcriptional induction of genes in response to pheromone signaling. This chain is Serine/threonine-protein kinase PRR2 (PRR2), found in Saccharomyces cerevisiae (strain ATCC 204508 / S288c) (Baker's yeast).